A 341-amino-acid chain; its full sequence is MQQLTIAIDAMGGDFGPQVTVPAAVQALSQFPELKITVIGDRDAISTQLTHLNYIPNSRFSIVHSESVIGNNTQPSKALRHSRGSSMRMAIDMVANKEADACISAGNTGALMGLSRFTLKLLPGVERPALISPLPTKNNQRTWMLDLGANVSCDAETLFQFAVMGSELAEQTLKRKAKVALLNIGEEEIKGNDQIKRCAEMLNQCQDIEFIGYIEGDKLYQGIADVVVCDGFVGNVCLKTSEGVAHLFLDQLKSHLITSKFKQFIAKWLFGDVISCLKGLNPDQYNGASLIGLRGIVVKSHGSADVSAFNNAIKEAVHEVKRQIPNRISDRLEAVLLERHY.

It belongs to the PlsX family. Homodimer. Probably interacts with PlsY.

It localises to the cytoplasm. The enzyme catalyses a fatty acyl-[ACP] + phosphate = an acyl phosphate + holo-[ACP]. The protein operates within lipid metabolism; phospholipid metabolism. Its function is as follows. Catalyzes the reversible formation of acyl-phosphate (acyl-PO(4)) from acyl-[acyl-carrier-protein] (acyl-ACP). This enzyme utilizes acyl-ACP as fatty acyl donor, but not acyl-CoA. This Aliivibrio fischeri (strain ATCC 700601 / ES114) (Vibrio fischeri) protein is Phosphate acyltransferase.